Reading from the N-terminus, the 314-residue chain is Target of rapamycin complex subunit wat1 (314 aa).

WD repeat units follow at residues 1 to 35, 38 to 76, 81 to 120, 122 to 161, 165 to 204, 213 to 252, and 257 to 296; these read MSVQ…CSRT, HADS…QMPL, GHTN…VQRN, DHKS…CTHE, EEDV…GASL, AHQR…FMLE, and GHQR…TIRQ. The residue at position 141 (Ser-141) is a Phosphoserine.

It belongs to the WD repeat LST8 family. The target of rapamycin complex 1 (TORC1) is composed of at least mip1, pop3/wat1, tco89, toc1 and tor2. The target of rapamycin complex 2 (TORC2) is composed of at least bit61, pop3/wat1, sin1, ste20 and tor1. Interacts with prp2.

It is found in the cytoplasm. It localises to the nucleus. Component of both TORC1 and TORC2, which regulate multiple cellular processes to control cell growth in response to environmental signals. Nutrient limitation and environmental stress signals cause inactivation of TORC1. Active TORC1 positively controls cell growth and ribosome biogenesis by regulating ribosomal protein gene expression. TORC1 negatively controls G1 cell-cycle arrest, sexual development and amino acid uptake. Represses mating, meiosis and sporulation efficiency by interfering with the functions of the transcription factor ste11 and the meiosis-promoting RNA-binding protein mei2. TORC2 is required for cell survival under various stress conditions. TORC2 positively controls G1 cell-cycle arrest, sexual development and amino acid uptake. Positively regulates amino acid uptake through the control of expression of amino acid permeases. May play a role in mRNA maturation as a coupling protein between splicing and synthesis and/or stabilization. The polypeptide is Target of rapamycin complex subunit wat1 (Schizosaccharomyces pombe (strain 972 / ATCC 24843) (Fission yeast)).